We begin with the raw amino-acid sequence, 244 residues long: Octanoyltransferase (244 aa).

Residues 49 to 237 (VAPGNFLIFC…HLTALFELHI (189 aa)) enclose the BPL/LPL catalytic domain. Substrate contacts are provided by residues 94–101 (RGGDITYH), 167–169 (AMG), and 180–182 (GFA). The Acyl-thioester intermediate role is filled by Cys-198.

It belongs to the LipB family.

The protein resides in the cytoplasm. It carries out the reaction octanoyl-[ACP] + L-lysyl-[protein] = N(6)-octanoyl-L-lysyl-[protein] + holo-[ACP] + H(+). Its pathway is protein modification; protein lipoylation via endogenous pathway; protein N(6)-(lipoyl)lysine from octanoyl-[acyl-carrier-protein]: step 1/2. Its function is as follows. Catalyzes the transfer of endogenously produced octanoic acid from octanoyl-acyl-carrier-protein onto the lipoyl domains of lipoate-dependent enzymes. Lipoyl-ACP can also act as a substrate although octanoyl-ACP is likely to be the physiological substrate. In Cytophaga hutchinsonii (strain ATCC 33406 / DSM 1761 / CIP 103989 / NBRC 15051 / NCIMB 9469 / D465), this protein is Octanoyltransferase.